The primary structure comprises 137 residues: Large ribosomal subunit protein uL16c (137 aa).

The tract at residues 1-21 (MLSPKKTKYRKQHRGRMKGKA) is disordered.

The protein belongs to the universal ribosomal protein uL16 family. As to quaternary structure, part of the 50S ribosomal subunit.

It is found in the plastid. The protein resides in the chloroplast. In Oedogonium cardiacum (Filamentous green alga), this protein is Large ribosomal subunit protein uL16c.